A 663-amino-acid chain; its full sequence is Methionine--tRNA ligase (663 aa).

The short motif at 10–20 is the 'HIGH' region element; it reads AYTNGPLHLGH. Zn(2+) contacts are provided by cysteine 142, cysteine 145, cysteine 154, and cysteine 157. The 'KMSKS' region motif lies at 323–327; it reads KMSTS. Threonine 326 provides a ligand contact to ATP. A tRNA-binding domain is found at 563 to 663; sequence YFGNIDLRVG…RDLPVGSKIH (101 aa).

It belongs to the class-I aminoacyl-tRNA synthetase family. MetG type 1 subfamily. In terms of assembly, homodimer. It depends on Zn(2+) as a cofactor.

Its subcellular location is the cytoplasm. The enzyme catalyses tRNA(Met) + L-methionine + ATP = L-methionyl-tRNA(Met) + AMP + diphosphate. Its function is as follows. Is required not only for elongation of protein synthesis but also for the initiation of all mRNA translation through initiator tRNA(fMet) aminoacylation. The protein is Methionine--tRNA ligase of Methanococcus maripaludis (strain C5 / ATCC BAA-1333).